The sequence spans 500 residues: Keratin, type II cuticular Hb1 (500 aa).

The segment at 1-106 (MTCGSGFRGR…PNAQCVKQEE (106 aa)) is head. Positions 106 to 417 (EKEQIKCLNN…RLLEGEEQRL (312 aa)) constitute an IF rod domain. Residues 107 to 141 (KEQIKCLNNRFAAFIDKVRFLEQQNKLLETKLQFY) form a coil 1A region. The linker 1 stretch occupies residues 142 to 151 (QNRQCCESNL). Residues 152-252 (EPLFNGYIET…YEEEIRVLQA (101 aa)) form a coil 1B region. A Glycyl lysine isopeptide (Lys-Gly) (interchain with G-Cter in SUMO1) cross-link involves residue lysine 212. The interval 253 to 269 (HISDTSVIVKMDNSRDL) is linker 12. The tract at residues 270–413 (NMDNIVAEIK…ATYRRLLEGE (144 aa)) is coil 2. Residues 414–500 (EQRLCEGVGS…GSCASVCRKC (87 aa)) form a tail region.

This sequence belongs to the intermediate filament family. Heterotetramer of two type I and two type II keratins.

The protein is Keratin, type II cuticular Hb1 of Bos taurus (Bovine).